The sequence spans 76 residues: Conotoxin Lt6.1 (76 aa).

Positions 1–22 are cleaved as a signal peptide; that stretch reads MKLTCVLIIAVLFLMDNQLITA. Positions 23-48 are excised as a propeptide; that stretch reads DYPRDEQVYRAVRLRDAMQKSKGSGS. Cystine bridges form between Cys-49/Cys-62, Cys-56/Cys-67, and Cys-61/Cys-75.

This sequence belongs to the conotoxin O1 superfamily. Expressed by the venom duct.

The protein resides in the secreted. The sequence is that of Conotoxin Lt6.1 from Conus litteratus (Lettered cone).